The sequence spans 316 residues: MSQPNQIHNALYLAFQRLQWAGLRESVPLTLSENDLADLRGINEKISLSEVTDIYLPLSRLLNLNVGAKQQRGLALNEFLGHVPPKRPYIISIAGSVAVGKSTTARILQALLSHWPEHPKVDLITTDGFLYPLAELKRRGLLQRKGFPESYDMKALVEFISAIKAGEATVSSPIYSHITYDRIPDEQQWIRQPDILIIEGLNVLQTGQDSPVDTQRPFVSDFVDFSIYVDANESLLKKWYIDRFLQFRTGAFSSENSYFHHYSKLGDKEATATASNIWDTINGPNLTLNILPTRERAHLILQKGPDHLMDQVLLRK.

An ATP-binding site is contributed by Gly-95 to Ser-102.

It belongs to the prokaryotic pantothenate kinase family.

Its subcellular location is the cytoplasm. The enzyme catalyses (R)-pantothenate + ATP = (R)-4'-phosphopantothenate + ADP + H(+). Its pathway is cofactor biosynthesis; coenzyme A biosynthesis; CoA from (R)-pantothenate: step 1/5. The polypeptide is Pantothenate kinase (Shewanella halifaxensis (strain HAW-EB4)).